The chain runs to 257 residues: Septu protein PtuB (257 aa).

The HNH domain occupies 49–96; the sequence is CVYCECRLDEESKYMEVEHFLPKDTYPNLVVNWRNLLPSCKRCNGKKG.

In terms of biological role, component of antiviral defense system Septu type I, composed of PtuA and PtuB. Expression of Septu type I in B.subtilis (strain BEST7003) confers resistance to phages SBSphiC and SBSphiJ. May be a nuclease. The chain is Septu protein PtuB from Bacillus thuringiensis.